A 62-amino-acid polypeptide reads, in one-letter code: Metallothionein (62 aa).

Residue methionine 1 is modified to N-acetylmethionine. Residues 1–30 are beta; the sequence is MDPQDCKCETGASCSCGTTCSCSNCKCTSC. A divalent metal cation contacts are provided by cysteine 6, cysteine 8, cysteine 14, cysteine 16, cysteine 20, cysteine 22, cysteine 25, cysteine 27, cysteine 30, cysteine 34, cysteine 35, cysteine 37, cysteine 38, cysteine 42, cysteine 45, cysteine 49, cysteine 51, cysteine 58, cysteine 60, and cysteine 61. An alpha region spans residues 31-62; that stretch reads KKSCCSCCPAECSKCSQGCHCEKGSKKCSCCN.

This sequence belongs to the metallothionein superfamily. Type 1 family.

In terms of biological role, metallothioneins have a high content of cysteine residues that bind various heavy metals. The polypeptide is Metallothionein (mt-a) (Xenopus laevis (African clawed frog)).